We begin with the raw amino-acid sequence, 191 residues long: Prophage tail fiber assembly protein homolog TfaR (191 aa).

Belongs to the tfa family.

In Escherichia coli (strain K12), this protein is Prophage tail fiber assembly protein homolog TfaR (tfaR).